The primary structure comprises 214 residues: Probable nicotinate-nucleotide adenylyltransferase (214 aa).

It belongs to the NadD family.

The enzyme catalyses nicotinate beta-D-ribonucleotide + ATP + H(+) = deamido-NAD(+) + diphosphate. Its pathway is cofactor biosynthesis; NAD(+) biosynthesis; deamido-NAD(+) from nicotinate D-ribonucleotide: step 1/1. Functionally, catalyzes the reversible adenylation of nicotinate mononucleotide (NaMN) to nicotinic acid adenine dinucleotide (NaAD). In Aeromonas salmonicida (strain A449), this protein is Probable nicotinate-nucleotide adenylyltransferase.